The following is a 697-amino-acid chain: Glycine--tRNA ligase beta subunit (697 aa).

The protein belongs to the class-II aminoacyl-tRNA synthetase family. Tetramer of two alpha and two beta subunits.

Its subcellular location is the cytoplasm. The enzyme catalyses tRNA(Gly) + glycine + ATP = glycyl-tRNA(Gly) + AMP + diphosphate. The sequence is that of Glycine--tRNA ligase beta subunit from Ralstonia nicotianae (strain ATCC BAA-1114 / GMI1000) (Ralstonia solanacearum).